We begin with the raw amino-acid sequence, 464 residues long: Glucose-6-phosphate isomerase (464 aa).

The Proton donor role is filled by Glu290. Active-site residues include His319 and Lys433.

Belongs to the GPI family.

The protein localises to the cytoplasm. It catalyses the reaction alpha-D-glucose 6-phosphate = beta-D-fructose 6-phosphate. It functions in the pathway carbohydrate biosynthesis; gluconeogenesis. The protein operates within carbohydrate degradation; glycolysis; D-glyceraldehyde 3-phosphate and glycerone phosphate from D-glucose: step 2/4. In terms of biological role, catalyzes the reversible isomerization of glucose-6-phosphate to fructose-6-phosphate. The protein is Glucose-6-phosphate isomerase of Carboxydothermus hydrogenoformans (strain ATCC BAA-161 / DSM 6008 / Z-2901).